The primary structure comprises 103 residues: Integration host factor subunit beta (103 aa).

Positions 62 to 81 (RNPKTGESVALPGKHVPHFK) are disordered.

The protein belongs to the bacterial histone-like protein family. Heterodimer of an alpha and a beta chain.

In terms of biological role, this protein is one of the two subunits of integration host factor, a specific DNA-binding protein that functions in genetic recombination as well as in transcriptional and translational control. The chain is Integration host factor subunit beta from Xanthomonas campestris pv. campestris (strain B100).